The primary structure comprises 160 residues: F-box protein At1g15015 (160 aa).

The F-box domain maps to 1-44; sequence MDVTLPHHVVEDILERLPVKTLRKFKCVCSTWRSTIDSQRFKDR.

The sequence is that of F-box protein At1g15015 from Arabidopsis thaliana (Mouse-ear cress).